A 119-amino-acid chain; its full sequence is Large ribosomal subunit protein bL20 (119 aa).

The protein belongs to the bacterial ribosomal protein bL20 family.

In terms of biological role, binds directly to 23S ribosomal RNA and is necessary for the in vitro assembly process of the 50S ribosomal subunit. It is not involved in the protein synthesizing functions of that subunit. The chain is Large ribosomal subunit protein bL20 from Herminiimonas arsenicoxydans.